Consider the following 390-residue polypeptide: Elongation factor Tu 1 (390 aa).

Residues 10 to 201 (KPHVNVGTIG…LDEYVAVPPR (192 aa)) enclose the tr-type G domain. The interval 19 to 26 (GHVDHGKT) is G1. 19 to 26 (GHVDHGKT) lines the GTP pocket. Residue Thr26 coordinates Mg(2+). The tract at residues 55 to 59 (GITIA) is G2. The segment at 76–79 (DCPG) is G3. GTP contacts are provided by residues 76 to 80 (DCPGH) and 131 to 134 (NKAD). The G4 stretch occupies residues 131 to 134 (NKAD). The G5 stretch occupies residues 168–170 (SAL).

Belongs to the TRAFAC class translation factor GTPase superfamily. Classic translation factor GTPase family. EF-Tu/EF-1A subfamily. As to quaternary structure, monomer.

It is found in the cytoplasm. The enzyme catalyses GTP + H2O = GDP + phosphate + H(+). GTP hydrolase that promotes the GTP-dependent binding of aminoacyl-tRNA to the A-site of ribosomes during protein biosynthesis. The protein is Elongation factor Tu 1 of Wolbachia pipientis wMel.